We begin with the raw amino-acid sequence, 233 residues long: Probable tetraheme cytochrome c-type (233 aa).

An N-terminal signal peptide occupies residues 1-28 (MTRLQKGSIGTLLTGALLGIVLVAVVFG). 14 residues coordinate heme: Cys-39, Cys-42, Met-45, Cys-67, Cys-70, His-71, Glu-93, Cys-131, Cys-134, His-135, Cys-159, Cys-162, His-163, and His-168. Residues 182–233 (QGKLVLKPEDDGDDEEADEDEDEETEEADDSSDSESASSSDNSDNEDDNNDE) are disordered. Acidic residues-rich tracts occupy residues 191–214 (DDGD…DSSD) and 224–233 (SDNEDDNNDE).

It belongs to the NapC/NirT/NrfH family. Post-translationally, binds 4 heme groups per subunit.

It is found in the periplasm. The protein is Probable tetraheme cytochrome c-type (cycX1) of Nitrosomonas europaea (strain ATCC 19718 / CIP 103999 / KCTC 2705 / NBRC 14298).